The primary structure comprises 364 residues: Methylthioribose-1-phosphate isomerase (364 aa).

Asp-254 serves as the catalytic Proton donor.

This sequence belongs to the eIF-2B alpha/beta/delta subunits family. MtnA subfamily.

Its subcellular location is the cytoplasm. It localises to the nucleus. It carries out the reaction 5-(methylsulfanyl)-alpha-D-ribose 1-phosphate = 5-(methylsulfanyl)-D-ribulose 1-phosphate. Its pathway is amino-acid biosynthesis; L-methionine biosynthesis via salvage pathway; L-methionine from S-methyl-5-thio-alpha-D-ribose 1-phosphate: step 1/6. Functionally, catalyzes the interconversion of methylthioribose-1-phosphate (MTR-1-P) into methylthioribulose-1-phosphate (MTRu-1-P). In Drosophila erecta (Fruit fly), this protein is Methylthioribose-1-phosphate isomerase.